Here is a 337-residue protein sequence, read N- to C-terminus: Holliday junction branch migration complex subunit RuvB (337 aa).

The large ATPase domain (RuvB-L) stretch occupies residues 1–182; that stretch reads MSEEKSVLRD…FGAVFRLSYY (182 aa). ATP is bound by residues L21, R22, G63, K66, T67, T68, 129 to 131, R172, Y182, and R219; that span reads EDY. Residue T67 coordinates Mg(2+). The interval 183 to 253 is small ATPAse domain (RuvB-S); it reads KLEEIKQIVR…ITQLALTKLG (71 aa). A head domain (RuvB-H) region spans residues 256–337; the sequence is HKGLDASDYL…VKYYKGLLDN (82 aa). The DNA site is built by R311 and R316.

The protein belongs to the RuvB family. In terms of assembly, homohexamer. Forms an RuvA(8)-RuvB(12)-Holliday junction (HJ) complex. HJ DNA is sandwiched between 2 RuvA tetramers; dsDNA enters through RuvA and exits via RuvB. An RuvB hexamer assembles on each DNA strand where it exits the tetramer. Each RuvB hexamer is contacted by two RuvA subunits (via domain III) on 2 adjacent RuvB subunits; this complex drives branch migration. In the full resolvosome a probable DNA-RuvA(4)-RuvB(12)-RuvC(2) complex forms which resolves the HJ.

The protein localises to the cytoplasm. The enzyme catalyses ATP + H2O = ADP + phosphate + H(+). The RuvA-RuvB-RuvC complex processes Holliday junction (HJ) DNA during genetic recombination and DNA repair, while the RuvA-RuvB complex plays an important role in the rescue of blocked DNA replication forks via replication fork reversal (RFR). RuvA specifically binds to HJ cruciform DNA, conferring on it an open structure. The RuvB hexamer acts as an ATP-dependent pump, pulling dsDNA into and through the RuvAB complex. RuvB forms 2 homohexamers on either side of HJ DNA bound by 1 or 2 RuvA tetramers; 4 subunits per hexamer contact DNA at a time. Coordinated motions by a converter formed by DNA-disengaged RuvB subunits stimulates ATP hydrolysis and nucleotide exchange. Immobilization of the converter enables RuvB to convert the ATP-contained energy into a lever motion, pulling 2 nucleotides of DNA out of the RuvA tetramer per ATP hydrolyzed, thus driving DNA branch migration. The RuvB motors rotate together with the DNA substrate, which together with the progressing nucleotide cycle form the mechanistic basis for DNA recombination by continuous HJ branch migration. Branch migration allows RuvC to scan DNA until it finds its consensus sequence, where it cleaves and resolves cruciform DNA. This is Holliday junction branch migration complex subunit RuvB from Acholeplasma laidlawii (strain PG-8A).